A 205-amino-acid polypeptide reads, in one-letter code: Guanylate kinase (205 aa).

Residues 6–185 (GLLIVLSGPS…ACERIKAIVV (180 aa)) enclose the Guanylate kinase-like domain. 13-20 (GPSGVGKG) is an ATP binding site.

This sequence belongs to the guanylate kinase family.

It localises to the cytoplasm. The enzyme catalyses GMP + ATP = GDP + ADP. Its function is as follows. Essential for recycling GMP and indirectly, cGMP. This is Guanylate kinase from Bacillus anthracis.